The following is a 224-amino-acid chain: UPF0758 protein IL0240 (224 aa).

An MPN domain is found at Gly102–Leu224. Zn(2+) is bound by residues His173, His175, and Asp186. The JAMM motif signature appears at His173–Asp186.

The protein belongs to the UPF0758 family.

This is UPF0758 protein IL0240 from Idiomarina loihiensis (strain ATCC BAA-735 / DSM 15497 / L2-TR).